A 1270-amino-acid polypeptide reads, in one-letter code: DNA-directed RNA polymerase subunit beta (1270 aa).

This sequence belongs to the RNA polymerase beta chain family. As to quaternary structure, the RNAP catalytic core consists of 2 alpha, 1 beta, 1 beta' and 1 omega subunit. When a sigma factor is associated with the core the holoenzyme is formed, which can initiate transcription.

The enzyme catalyses RNA(n) + a ribonucleoside 5'-triphosphate = RNA(n+1) + diphosphate. Its function is as follows. DNA-dependent RNA polymerase catalyzes the transcription of DNA into RNA using the four ribonucleoside triphosphates as substrates. The sequence is that of DNA-directed RNA polymerase subunit beta from Bacteroides fragilis (strain ATCC 25285 / DSM 2151 / CCUG 4856 / JCM 11019 / LMG 10263 / NCTC 9343 / Onslow / VPI 2553 / EN-2).